The sequence spans 385 residues: Protein pelota homolog (385 aa).

A Glycyl lysine isopeptide (Lys-Gly) (interchain with G-Cter in SUMO2) cross-link involves residue K162. 4 positions are modified to phosphoserine: S374, S380, S381, and S382.

Belongs to the eukaryotic release factor 1 family. Pelota subfamily. As to quaternary structure, component of the Pelota-HBS1L complex, also named Dom34-Hbs1 complex, composed of PELO and HBS1L. Interacts with PINK1. Interacts with ABCE1. Interacts with CNOT4. Requires a divalent metal cation as cofactor. As to expression, ubiquitously expressed.

The protein resides in the cytoplasm. In terms of biological role, component of the Pelota-HBS1L complex, a complex that recognizes stalled ribosomes and triggers the No-Go Decay (NGD) pathway. In the Pelota-HBS1L complex, PELO recognizes ribosomes stalled at the 3' end of an mRNA and engages stalled ribosomes by destabilizing mRNA in the mRNA channel. Following mRNA extraction from stalled ribosomes by the SKI complex, the Pelota-HBS1L complex promotes recruitment of ABCE1, which drives the disassembly of stalled ribosomes, followed by degradation of damaged mRNAs as part of the NGD pathway. As part of the PINK1-regulated signaling, upon mitochondrial damage is recruited to the ribosome/mRNA-ribonucleoprotein complex associated to mitochondrial outer membrane thereby enabling the recruitment of autophagy receptors and induction of mitophagy. This is Protein pelota homolog from Homo sapiens (Human).